The chain runs to 117 residues: MTEAATEMPSPINFTESACAKVQDLIAEEGNPDLKLRVFVTGGGCSGFQYGFTFDEIANEDDTAIERQGVTFLVDPMSYQYLVGAEIDYQESLEGSQFVIRNPNATTTCGCGSSFSV.

Positions 45, 109, and 111 each coordinate iron-sulfur cluster.

Belongs to the HesB/IscA family. In terms of assembly, homodimer. It depends on iron-sulfur cluster as a cofactor.

In terms of biological role, required for insertion of 4Fe-4S clusters. This is Putative iron-sulfur cluster insertion protein ErpA from Chromobacterium violaceum (strain ATCC 12472 / DSM 30191 / JCM 1249 / CCUG 213 / NBRC 12614 / NCIMB 9131 / NCTC 9757 / MK).